The chain runs to 752 residues: Probable beta-glucosidase D (752 aa).

A signal peptide spans 1–18; sequence MRFVSLAVGAALLGAAGA. 2 N-linked (GlcNAc...) asparagine glycosylation sites follow: asparagine 187 and asparagine 237. Residue aspartate 265 is part of the active site. Asparagine 299, asparagine 343, asparagine 441, asparagine 510, asparagine 532, asparagine 571, asparagine 586, asparagine 638, asparagine 661, and asparagine 743 each carry an N-linked (GlcNAc...) asparagine glycan.

The protein belongs to the glycosyl hydrolase 3 family.

The protein resides in the secreted. It catalyses the reaction Hydrolysis of terminal, non-reducing beta-D-glucosyl residues with release of beta-D-glucose.. It functions in the pathway glycan metabolism; cellulose degradation. In terms of biological role, beta-glucosidases are one of a number of cellulolytic enzymes involved in the degradation of cellulosic biomass. Catalyzes the last step releasing glucose from the inhibitory cellobiose. This chain is Probable beta-glucosidase D (bglD), found in Aspergillus oryzae (strain ATCC 42149 / RIB 40) (Yellow koji mold).